A 99-amino-acid chain; its full sequence is Protein E7 (99 aa).

Positions 1 to 41 (MHGEITTLQDYVLDLEPEATDLYCYEQLCDSSEEEEDTIDG) are E7 terminal domain. The LXCXE motif; interaction with host RB1 and TMEM173/STING motif lies at 22–26 (LYCYE). The segment at 59–95 (CCKCEATLRLCVQSTHIDIRKLEDLLMGTFGIVCPGC) is a zinc-finger region. Residues 77 to 85 (IRKLEDLLM) carry the Nuclear export signal motif.

Belongs to the papillomaviridae E7 protein family. In terms of assembly, homodimer. Homooligomer. Interacts with host RB1; this interaction induces dissociation of RB1-E2F1 complex thereby disrupting RB1 activity. Interacts with host EP300; this interaction represses EP300 transcriptional activity. Interacts with protein E2; this interaction inhibits E7 oncogenic activity. Interacts with host TMEM173/STING; this interaction impairs the ability of TMEM173/STING to sense cytosolic DNA and promote the production of type I interferon (IFN-alpha and IFN-beta). Post-translationally, highly phosphorylated.

It localises to the host cytoplasm. It is found in the host nucleus. Functionally, plays a role in viral genome replication by driving entry of quiescent cells into the cell cycle. Stimulation of progression from G1 to S phase allows the virus to efficiently use the cellular DNA replicating machinery to achieve viral genome replication. E7 protein has both transforming and trans-activating activities. Induces the disassembly of the E2F1 transcription factor from RB1, with subsequent transcriptional activation of E2F1-regulated S-phase genes. Interferes with host histone deacetylation mediated by HDAC1 and HDAC2, leading to transcription activation. Also plays a role in the inhibition of both antiviral and antiproliferative functions of host interferon alpha. Interaction with host TMEM173/STING impairs the ability of TMEM173/STING to sense cytosolic DNA and promote the production of type I interferon (IFN-alpha and IFN-beta). In Human papillomavirus 35, this protein is Protein E7.